The following is a 114-amino-acid chain: Procyclic form-specific polypeptide A-alpha (114 aa).

The N-terminal stretch at 1-27 (MAPRSLYLLAILLFSANLFAGVGFAAA) is a signal peptide. A disordered region spans residues 33–95 (SNVIVKGGKG…EPEPEPGAAT (63 aa)). The segment covering 47-89 (DGPEEPEETGPEETGPEETGPEETGPEETGPEETGPEETEPEP) has biased composition (acidic residues). Repeat copies occupy residues 48-52 (GPEEP), 56-60 (GPEET), 61-65 (GPEET), 66-70 (GPEET), 71-75 (GPEET), 76-80 (GPEET), and 81-85 (GPEET). The 7 X 5 AA tandem repeats of G-P-E-E-[PT] stretch occupies residues 48 to 85 (GPEEPEETGPEETGPEETGPEETGPEETGPEETGPEET). The GPI-anchor amidated glycine moiety is linked to residue G92. The propeptide occupies 93 to 114 (AATLKSVALPFAVAAAALVAAF).

The protein resides in the cell membrane. In terms of biological role, major surface antigen of procyclic forms. The protein is Procyclic form-specific polypeptide A-alpha (PARPA-ALPHA) of Trypanosoma brucei brucei.